The following is a 652-amino-acid chain: Complement component C1q receptor (652 aa).

Residues 1 to 21 (MATSMGLLLLLLLLLTQPGAG) form the signal peptide. At 24-580 (ADTEAVVCVG…QNNDGTDGQK (557 aa)) the chain is on the extracellular side. The 143-residue stretch at 32–174 (VGTACYTAHS…CGSPGSPGSN (143 aa)) folds into the C-type lectin domain. Cystine bridges form between C141–C165, C264–C275, C271–C285, C287–C300, C306–C317, C311–C328, C330–C343, C349–C358, C354–C367, C369–C383, C389–C400, C396–C409, C411–C425, C431–C443, C439–C452, and C454–C467. 2 consecutive EGF-like domains span residues 260 to 301 (PKYG…VTCA) and 302 to 344 (SRNP…LDCV). An N-linked (GlcNAc...) asparagine glycan is attached at N325. Residues 345 to 384 (DVDECQDSPCAQECVNTPGGFRCECWVGYEPGGPGEGACQ) form the EGF-like 3; calcium-binding domain. The EGF-like 4; calcium-binding domain occupies 385 to 426 (DVDECALGRSPCAQGCTNTDGSFHCSCEEGYVLAGEDGTQCQ). The 42-residue stretch at 427–468 (DVDECVGPGGPLCDSLCFNTQGSFHCGCLPGWVLAPNGVSCT) folds into the EGF-like 5; calcium-binding domain. 2 disordered regions span residues 472-546 (VSLG…VWRE) and 553-572 (TAAS…ATQN). Polar residues predominate over residues 512–526 (ATPTTSRPSLSSDAP). The chain crosses the membrane as a helical span at residues 581 to 601 (LLLFYILGTVVAILLLLALAL). Residues 602–652 (GLLVYRKRRAKREEKKEKKPQNAADSYSWVPERAESRAMENQYSPTPGTDC) are Cytoplasmic-facing. The disordered stretch occupies residues 611-652 (AKREEKKEKKPQNAADSYSWVPERAESRAMENQYSPTPGTDC). The span at 612–621 (KREEKKEKKP) shows a compositional bias: basic and acidic residues. S627 carries the phosphoserine modification. Y628 and Y644 each carry phosphotyrosine. Residues 640–652 (MENQYSPTPGTDC) show a composition bias toward polar residues.

As to quaternary structure, homodimer. Interacts with C1QBP; the association may represent a cell surface C1q receptor. Interacts with surfactant protein A/SFTPA1. Interacts with multimerin-2/MMRN2. Interacts with DAG1; this interaction plays an important role in endothelial cell migration. Interacts with CBL. Interacts with IGFBP7. Interacts with VEGFR2. In terms of assembly, (Microbial infection) Interacts with hepatitis virus C/HCV core protein. In terms of processing, N- and O-glycosylated. Post-translationally, phosphorylated on Tyr-628 and Tyr-644 by SRC; these phosphorylations promote endothelial cell adhesion and migration. Highly expressed in endothelial cells, platelets, cells of myeloid origin, such as monocytes and neutrophils. Not expressed in cells of lymphoid origin.

The protein localises to the cell membrane. Its function is as follows. Cell surface receptor that plays a role in various physiological processes including inflammation, phagocytosis, and cell adhesion. Plays a role in phagocytosis and enhances the uptake of apoptotic cells and immune complexes by acting as a receptor for defense collagens including surfactant protein A/SFTPA1, C1q, and mannose-binding lectin (MBL2). Plays a role in the regulation of endothelial cell function and adhesion by activating angiogenesis. Mechanistically, exerts its angiogenic function by associating with beta-dystroglycan, leading to SRC-dependent phosphorylation and subsequent recruitment of CBL. In turn, CBL provides a docking site for downstream signaling components, such as CRKL to enhance cell migration. Participates in angiogenesis also by acting as a receptor for the ECM pan-endothelial glycoprotein multimerin-2/MMRN2 and IGFBP7 ligands. Both ligands play a non-redundant role in CD93-mediated endothelial cell function. Acts as a key regulator of endothelial barrier function through modulating VEGFR2 function. In Homo sapiens (Human), this protein is Complement component C1q receptor (CD93).